A 285-amino-acid polypeptide reads, in one-letter code: 2-dehydro-3-deoxyphosphooctonate aldolase (285 aa).

This sequence belongs to the KdsA family.

It localises to the cytoplasm. It catalyses the reaction D-arabinose 5-phosphate + phosphoenolpyruvate + H2O = 3-deoxy-alpha-D-manno-2-octulosonate-8-phosphate + phosphate. It functions in the pathway carbohydrate biosynthesis; 3-deoxy-D-manno-octulosonate biosynthesis; 3-deoxy-D-manno-octulosonate from D-ribulose 5-phosphate: step 2/3. Its pathway is bacterial outer membrane biogenesis; lipopolysaccharide biosynthesis. The chain is 2-dehydro-3-deoxyphosphooctonate aldolase from Acinetobacter baumannii (strain AB307-0294).